The primary structure comprises 53 residues: UPF0391 membrane protein BamMC406_6344 (53 aa).

2 helical membrane-spanning segments follow: residues 5–25 (AIIFFVIAIIAAVFGFGGIAA) and 30–50 (IAKILFYIFVVIFLVTLLLGV).

This sequence belongs to the UPF0391 family.

It localises to the cell membrane. This chain is UPF0391 membrane protein BamMC406_6344, found in Burkholderia ambifaria (strain MC40-6).